Consider the following 467-residue polypeptide: Probable receptor-like protein kinase At3g17420 (467 aa).

Residues 1–35 (MTSQLKRTLTKRYGVLELWEIIVIALFAAFIVILV) form the signal peptide. Residues 36 to 123 (LSVWLSFRKK…LPPSTPSTTA (88 aa)) lie on the Extracellular side of the membrane. Asn50 carries N-linked (GlcNAc...) asparagine glycosylation. Position 70 is a phosphoserine (Ser70). N-linked (GlcNAc...) asparagine glycosylation occurs at Asn79. Positions 102 to 126 (GSLEKKPLVGSHLPPSTPSTTAPSP) are disordered. A helical membrane pass occupies residues 124–144 (PSPLLGLPEVSHIGWGHWFTL). Topologically, residues 145–467 (RDLQLATNHF…DNDITTDAKI (323 aa)) are cytoplasmic. The 280-residue stretch at 154 to 433 (FSKESIIGDG…MLESDEYPVM (280 aa)) folds into the Protein kinase domain. Residues 160–168 (IGDGGYGVV) and Lys182 each bind ATP. Residue Tyr227 is modified to Phosphotyrosine. The active-site Proton acceptor is the Asp280. Residues Ser284 and Ser313 each carry the phosphoserine modification. 2 positions are modified to phosphothreonine: Thr314 and Thr319. Phosphotyrosine is present on Tyr327. The tract at residues 413–467 (DKRPKMSQVARMLESDEYPVMPREERRRRRNQNAETHRESTDTNKDNDITTDAKI) is disordered. Residues 447–467 (ETHRESTDTNKDNDITTDAKI) are compositionally biased toward basic and acidic residues.

The protein belongs to the protein kinase superfamily. Ser/Thr protein kinase family.

The protein localises to the cell membrane. It catalyses the reaction L-seryl-[protein] + ATP = O-phospho-L-seryl-[protein] + ADP + H(+). It carries out the reaction L-threonyl-[protein] + ATP = O-phospho-L-threonyl-[protein] + ADP + H(+). This chain is Probable receptor-like protein kinase At3g17420, found in Arabidopsis thaliana (Mouse-ear cress).